A 303-amino-acid polypeptide reads, in one-letter code: ADP-ribosyl cyclase/cyclic ADP-ribose hydrolase 1 (303 aa).

Over 1 to 21 (MANYEFSQVSEDRPGCRLTRK) the chain is Cytoplasmic. Residues 22–44 (AQIGLGVGLLLLVALVVVVVIVL) traverse the membrane as a helical; Signal-anchor for type II membrane protein segment. At 45–303 (WPRSPLVWKG…PEHPSCRLNV (259 aa)) the chain is on the extracellular side. Intrachain disulfides connect Cys-69-Cys-85, Cys-102-Cys-183, and Cys-163-Cys-176. Asn-103 is a glycosylation site (N-linked (GlcNAc...) asparagine). Residue Cys-122 is part of the active site. N-linked (GlcNAc...) asparagine glycosylation is present at Asn-123. Residue Cys-204 is part of the active site. N-linked (GlcNAc...) asparagine glycans are attached at residues Asn-212 and Asn-222. 2 disulfide bridges follow: Cys-257–Cys-278 and Cys-290–Cys-299.

It belongs to the ADP-ribosyl cyclase family. Homodimer. Spleen, liver, heart, thymus, thyroid gland, ileum, colon, cerebellum, salivary gland, adrenal gland, jejunum, islets of Langerhans and osteoclasts.

The protein resides in the cell membrane. The catalysed reaction is NAD(+) = cyclic ADP-beta-D-ribose + nicotinamide + H(+). The enzyme catalyses nicotinate + NADP(+) = nicotinate-adenine dinucleotide phosphate + nicotinamide. It catalyses the reaction NAD(+) + H2O = ADP-D-ribose + nicotinamide + H(+). With respect to regulation, both NAADP and cADPR synthesis are inhibited by nicotinic acid. In terms of biological role, synthesizes the second messengers cyclic ADP-ribose and nicotinate-adenine dinucleotide phosphate, the former a second messenger for glucose-induced insulin secretion, the latter a Ca(2+) mobilizer. Also has cADPR hydrolase activity. Its function is as follows. Regulates osteoclastic bone resorption, probably via production of cyclic ADP-ribose and triggering of a cytosolic calcium ion signal through ryanodine receptor activation. The chain is ADP-ribosyl cyclase/cyclic ADP-ribose hydrolase 1 (Cd38) from Rattus norvegicus (Rat).